A 335-amino-acid polypeptide reads, in one-letter code: tRNA N6-adenosine threonylcarbamoyltransferase (335 aa).

Fe cation is bound by residues His-110 and His-114. Residues 132-136 (LVSGG), Asp-165, Gly-178, and Asn-271 contribute to the substrate site. A Fe cation-binding site is contributed by Asp-299.

Belongs to the KAE1 / TsaD family. Requires Fe(2+) as cofactor.

The protein localises to the cytoplasm. The enzyme catalyses L-threonylcarbamoyladenylate + adenosine(37) in tRNA = N(6)-L-threonylcarbamoyladenosine(37) in tRNA + AMP + H(+). Its function is as follows. Required for the formation of a threonylcarbamoyl group on adenosine at position 37 (t(6)A37) in tRNAs that read codons beginning with adenine. Is involved in the transfer of the threonylcarbamoyl moiety of threonylcarbamoyl-AMP (TC-AMP) to the N6 group of A37, together with TsaE and TsaB. TsaD likely plays a direct catalytic role in this reaction. The chain is tRNA N6-adenosine threonylcarbamoyltransferase from Campylobacter jejuni subsp. jejuni serotype O:23/36 (strain 81-176).